Consider the following 83-residue polypeptide: Cytochrome b559 subunit alpha (83 aa).

A helical membrane pass occupies residues 21–35; the sequence is VIHSITIPSLFIAGW. H23 lines the heme pocket.

The protein belongs to the PsbE/PsbF family. In terms of assembly, heterodimer of an alpha subunit and a beta subunit. PSII is composed of 1 copy each of membrane proteins PsbA, PsbB, PsbC, PsbD, PsbE, PsbF, PsbH, PsbI, PsbJ, PsbK, PsbL, PsbM, PsbT, PsbX, PsbY, PsbZ, Psb30/Ycf12, at least 3 peripheral proteins of the oxygen-evolving complex and a large number of cofactors. It forms dimeric complexes. It depends on heme b as a cofactor.

It localises to the plastid. It is found in the chloroplast thylakoid membrane. Functionally, this b-type cytochrome is tightly associated with the reaction center of photosystem II (PSII). PSII is a light-driven water:plastoquinone oxidoreductase that uses light energy to abstract electrons from H(2)O, generating O(2) and a proton gradient subsequently used for ATP formation. It consists of a core antenna complex that captures photons, and an electron transfer chain that converts photonic excitation into a charge separation. The chain is Cytochrome b559 subunit alpha from Pinus koraiensis (Korean pine).